The primary structure comprises 313 residues: Mitochondrial uncoupling protein 5 (313 aa).

3 Solcar repeats span residues Lys4 to Glu108, Met117 to Thr208, and Asp217 to Leu307. 6 helical membrane passes run Phe6–Ile26, Met77–Thr97, Ile123–Ala143, Arg182–Tyr202, Val223–Ile243, and Tyr280–Thr300.

This sequence belongs to the mitochondrial carrier (TC 2.A.29) family. In terms of tissue distribution, expressed in roots, leaves, stems and flowers.

It localises to the mitochondrion inner membrane. PUMPS are mitochondrial transporter proteins that create proton leaks across the inner mitochondrial membrane, thus uncoupling oxidative phosphorylation. This leads to a decrease in the efficiency of oxidative phosphorylation and an increase in heat production. May be involved in protecting plant cells against oxidative stress damage. Recombinant PUMP5, reconstituted into liposomes, transports a wide range of dicarboxylic acids including malate, oxaloacetate and succinate as well as phosphate, sulfate and thiosulfate. However, it is unknown if these transports are of any biological significance in vivo. This is Mitochondrial uncoupling protein 5 (PUMP5) from Arabidopsis thaliana (Mouse-ear cress).